Reading from the N-terminus, the 282-residue chain is Phosphate transport system permease protein PstA (282 aa).

Transmembrane regions (helical) follow at residues 22–42 (LSYI…FTLI), 71–91 (LIGS…IGVL), 111–131 (FLND…VYSL), 136–156 (IEHF…IPIV), 198–218 (ILTG…PLLF), and 254–274 (NLAW…NIFT). An ABC transmembrane type-1 domain is found at 71–274 (LIGSFFIVGA…LFVLCLNIFT (204 aa)).

This sequence belongs to the binding-protein-dependent transport system permease family. CysTW subfamily.

The protein resides in the cell inner membrane. Its function is as follows. Part of the binding-protein-dependent transport system for phosphate; probably responsible for the translocation of the substrate across the membrane. This chain is Phosphate transport system permease protein PstA (pstA), found in Haemophilus influenzae (strain ATCC 51907 / DSM 11121 / KW20 / Rd).